A 351-amino-acid chain; its full sequence is Ion-translocating oxidoreductase complex subunit D (351 aa).

The next 4 membrane-spanning stretches (helical) occupy residues 20–40, 44–64, 89–109, and 123–143; these read IMLW…YFFG, LIQV…TLSL, LPPL…IIIA, and PAMI…TSWL. FMN phosphoryl threonine is present on Thr-187. The next 5 helical transmembrane spans lie at 215–235, 244–264, 267–287, 301–321, and 322–342; these read LSGI…LFLL, IPVS…IIAP, FAQP…FFIA, LIFG…GGYP, and DGVA…DYYT.

It belongs to the NqrB/RnfD family. The complex is composed of six subunits: RnfA, RnfB, RnfC, RnfD, RnfE and RnfG. FMN serves as cofactor.

Its subcellular location is the cell inner membrane. Its function is as follows. Part of a membrane-bound complex that couples electron transfer with translocation of ions across the membrane. The polypeptide is Ion-translocating oxidoreductase complex subunit D (Pectobacterium atrosepticum (strain SCRI 1043 / ATCC BAA-672) (Erwinia carotovora subsp. atroseptica)).